We begin with the raw amino-acid sequence, 123 residues long: MPTIKQLIRNTRQPIRNVTKSPALGGCPQRRGTCTRVYTITPKKPNSALRKVARVRLTSGFEITAYIPGIGHNSQEHSVVLVRGGRVKDLPGVRYHIVRGTLDAVGVKDRQQGRSQYGVKKPK.

Belongs to the universal ribosomal protein uS12 family. Part of the 30S ribosomal subunit.

It is found in the plastid. Its subcellular location is the chloroplast. Its function is as follows. With S4 and S5 plays an important role in translational accuracy. Located at the interface of the 30S and 50S subunits. This chain is Small ribosomal subunit protein uS12cz/uS12cy (rps12-A), found in Eucalyptus globulus subsp. globulus (Tasmanian blue gum).